A 100-amino-acid chain; its full sequence is Small ribosomal subunit protein uS14c (100 aa).

It belongs to the universal ribosomal protein uS14 family. Part of the 30S ribosomal subunit.

Its subcellular location is the plastid. It is found in the chloroplast. Functionally, binds 16S rRNA, required for the assembly of 30S particles. This chain is Small ribosomal subunit protein uS14c, found in Vitis vinifera (Grape).